The primary structure comprises 114 residues: Abscisic stress-ripening protein 2 (114 aa).

Disordered regions lie at residues 1 to 25 and 88 to 114; these read MAEE…GGPV and FHEH…HHHY. The segment covering 7 to 16 has biased composition (basic residues); that stretch reads QHHHHLFHHK. Positions 97–107 are enriched in basic and acidic residues; that stretch reads AKKEKKEVEGG.

This sequence belongs to the abscisic acid and water stress-induced protein family.

The chain is Abscisic stress-ripening protein 2 from Solanum lycopersicum (Tomato).